The chain runs to 90 residues: Protein S100-A6 (90 aa).

2 EF-hand domains span residues 12–47 (LIGI…IGSK) and 48–83 (LQDA…LAMI). Ca(2+) contacts are provided by threonine 28 and glutamate 33. At lysine 40 the chain carries N6-acetyllysine. Serine 46 carries the post-translational modification Phosphoserine. Position 47 is an N6-acetyllysine; alternate (lysine 47). N6-succinyllysine; alternate is present on lysine 47. Positions 61, 63, 65, 67, and 72 each coordinate Ca(2+).

It belongs to the S-100 family. Homodimer; head to tail assembly of 2 subunits. Interacts with CACYBP in a calcium-dependent manner. Interacts with ANXA2 and ANXA11 (via N-terminus). Interacts with SUGT1. Interacts with TP53; has higher affinity for TP53 that is phosphorylated on its N-terminal domain, and lower affinity for TP53 that is phosphorylated on its C-terminal domain. Interacts with tropomyosin. Interacts with FKBP4. Interacts with PPP5C (via TPR repeats); the interaction is calcium-dependent and modulates PPP5C activity. Interacts with TPPP; this interaction inhibits TPPP dimerization.

The protein resides in the nucleus envelope. It localises to the cytoplasm. Its subcellular location is the cell membrane. Its function is as follows. May function as calcium sensor and modulator, contributing to cellular calcium signaling. May function by interacting with other proteins, such as TPR-containing proteins, and indirectly play a role in many physiological processes such as the reorganization of the actin cytoskeleton and in cell motility. Binds 2 calcium ions. Calcium binding is cooperative. The sequence is that of Protein S100-A6 (S100A6) from Oryctolagus cuniculus (Rabbit).